Here is a 241-residue protein sequence, read N- to C-terminus: Uridylate kinase (241 aa).

Residues 10–13, G53, and R57 each bind ATP; that span reads KLSG. UMP is bound by residues D72 and 133–140; that span reads AGSPYFST. Positions 161, 167, and 170 each coordinate ATP.

The protein belongs to the UMP kinase family. Homohexamer.

It is found in the cytoplasm. The catalysed reaction is UMP + ATP = UDP + ADP. It functions in the pathway pyrimidine metabolism; CTP biosynthesis via de novo pathway; UDP from UMP (UMPK route): step 1/1. With respect to regulation, inhibited by UTP. Catalyzes the reversible phosphorylation of UMP to UDP. This Onion yellows phytoplasma (strain OY-M) protein is Uridylate kinase.